Reading from the N-terminus, the 98-residue chain is Aspartyl/glutamyl-tRNA(Asn/Gln) amidotransferase subunit C (98 aa).

It belongs to the GatC family. As to quaternary structure, heterotrimer of A, B and C subunits.

The enzyme catalyses L-glutamyl-tRNA(Gln) + L-glutamine + ATP + H2O = L-glutaminyl-tRNA(Gln) + L-glutamate + ADP + phosphate + H(+). It catalyses the reaction L-aspartyl-tRNA(Asn) + L-glutamine + ATP + H2O = L-asparaginyl-tRNA(Asn) + L-glutamate + ADP + phosphate + 2 H(+). Its function is as follows. Allows the formation of correctly charged Asn-tRNA(Asn) or Gln-tRNA(Gln) through the transamidation of misacylated Asp-tRNA(Asn) or Glu-tRNA(Gln) in organisms which lack either or both of asparaginyl-tRNA or glutaminyl-tRNA synthetases. The reaction takes place in the presence of glutamine and ATP through an activated phospho-Asp-tRNA(Asn) or phospho-Glu-tRNA(Gln). In Kocuria rhizophila (strain ATCC 9341 / DSM 348 / NBRC 103217 / DC2201), this protein is Aspartyl/glutamyl-tRNA(Asn/Gln) amidotransferase subunit C.